The sequence spans 618 residues: Dihydroxy-acid dehydratase (618 aa).

Asp81 is a Mg(2+) binding site. Position 122 (Cys122) interacts with [2Fe-2S] cluster. Residues Asp123 and Lys124 each coordinate Mg(2+). Lys124 carries the post-translational modification N6-carboxylysine. Residue Cys195 coordinates [2Fe-2S] cluster. Glu490 provides a ligand contact to Mg(2+). The active-site Proton acceptor is the Ser516.

This sequence belongs to the IlvD/Edd family. In terms of assembly, homodimer. [2Fe-2S] cluster is required as a cofactor. The cofactor is Mg(2+).

It carries out the reaction (2R)-2,3-dihydroxy-3-methylbutanoate = 3-methyl-2-oxobutanoate + H2O. It catalyses the reaction (2R,3R)-2,3-dihydroxy-3-methylpentanoate = (S)-3-methyl-2-oxopentanoate + H2O. It functions in the pathway amino-acid biosynthesis; L-isoleucine biosynthesis; L-isoleucine from 2-oxobutanoate: step 3/4. It participates in amino-acid biosynthesis; L-valine biosynthesis; L-valine from pyruvate: step 3/4. Its function is as follows. Functions in the biosynthesis of branched-chain amino acids. Catalyzes the dehydration of (2R,3R)-2,3-dihydroxy-3-methylpentanoate (2,3-dihydroxy-3-methylvalerate) into 2-oxo-3-methylpentanoate (2-oxo-3-methylvalerate) and of (2R)-2,3-dihydroxy-3-methylbutanoate (2,3-dihydroxyisovalerate) into 2-oxo-3-methylbutanoate (2-oxoisovalerate), the penultimate precursor to L-isoleucine and L-valine, respectively. This chain is Dihydroxy-acid dehydratase, found in Gluconobacter oxydans (strain 621H) (Gluconobacter suboxydans).